The sequence spans 266 residues: Thymidylate synthase (266 aa).

DUMP is bound at residue arginine 24. Histidine 54 is a binding site for (6R)-5,10-methylene-5,6,7,8-tetrahydrofolate. 129–130 (RR) lines the dUMP pocket. Cysteine 149 acts as the Nucleophile in catalysis. DUMP contacts are provided by residues 169–172 (RSAD), asparagine 180, and 210–212 (HIY). Aspartate 172 is a (6R)-5,10-methylene-5,6,7,8-tetrahydrofolate binding site. Alanine 265 provides a ligand contact to (6R)-5,10-methylene-5,6,7,8-tetrahydrofolate.

The protein belongs to the thymidylate synthase family. Bacterial-type ThyA subfamily. In terms of assembly, homodimer.

Its subcellular location is the cytoplasm. It carries out the reaction dUMP + (6R)-5,10-methylene-5,6,7,8-tetrahydrofolate = 7,8-dihydrofolate + dTMP. It participates in pyrimidine metabolism; dTTP biosynthesis. Catalyzes the reductive methylation of 2'-deoxyuridine-5'-monophosphate (dUMP) to 2'-deoxythymidine-5'-monophosphate (dTMP) while utilizing 5,10-methylenetetrahydrofolate (mTHF) as the methyl donor and reductant in the reaction, yielding dihydrofolate (DHF) as a by-product. This enzymatic reaction provides an intracellular de novo source of dTMP, an essential precursor for DNA biosynthesis. This Mycobacterium sp. (strain KMS) protein is Thymidylate synthase.